The chain runs to 438 residues: Exosome complex component RRP45B (438 aa).

2 disordered regions span residues 293-322 and 334-438; these read PTLA…RAAE and STEE…KNKS. Basic and acidic residues-rich tracts occupy residues 307 to 322 and 334 to 347; these read VKEE…RAAE and STEE…EEAA. Residues 380-394 are compositionally biased toward polar residues; it reads TKSSSTKKMNGSGNA. The span at 410-429 shows a compositional bias: basic and acidic residues; that stretch reads LGKKDTKHKDGEMTLKDAVK.

Belongs to the RNase PH family.

The protein localises to the cytoplasm. Its subcellular location is the nucleus. Functionally, probable 3'-&gt;5' exoribonuclease involved in the regulation of cuticular wax biosynthesis by controlling the expression of CER3. May act by degrading a specific mRNA species encoding a negative regulator of CER3 transcription. Can perform exosomal functions and complement the yeast rrp45 null mutant. The chain is Exosome complex component RRP45B from Arabidopsis thaliana (Mouse-ear cress).